The following is a 221-amino-acid chain: Alpha-ketoglutarate-dependent dioxygenase alkB homolog 7, mitochondrial (221 aa).

The N-terminal 23 residues, 1-23, are a transit peptide targeting the mitochondrion; the sequence is MAGGGQVVLRTLSQQGWVRGSGA. The Fe cation site is built by histidine 121 and aspartate 123. Tyrosine 165 lines the 2-oxoglutarate pocket. Histidine 177 provides a ligand contact to Fe cation. 2-oxoglutarate contacts are provided by residues 197–199 and arginine 203; that span reads RIS.

Belongs to the alkB family. Fe(2+) serves as cofactor.

The protein localises to the mitochondrion matrix. May function as protein hydroxylase; can catalyze auto-hydroxylation at Leu-110 (in vitro), but this activity may be due to the absence of the true substrate. Required to induce programmed necrosis in response to DNA damage caused by cytotoxic alkylating agents. Acts by triggering the collapse of mitochondrial membrane potential and loss of mitochondrial function that leads to energy depletion and cell death. ALKBH7-mediated necrosis is probably required to prevent the accumulation of cells with DNA damage. Does not display DNA demethylase activity. Involved in fatty acid metabolism. The chain is Alpha-ketoglutarate-dependent dioxygenase alkB homolog 7, mitochondrial (ALKBH7) from Bos taurus (Bovine).